Here is a 243-residue protein sequence, read N- to C-terminus: Probable flavin-dependent thymidylate synthase (243 aa).

In terms of domain architecture, ThyX spans 21-239; that stretch reads FEVDDFEESK…PNTYQDIPDV (219 aa). FAD is bound by residues S80 and 103-105; that span reads RHR. DUMP-binding positions include 100 to 103, 113 to 115, and R178; these read ELER and SQR. The short motif at 103–113 is the ThyX motif element; it reads RHRHLSFSVVS. 194 to 196 provides a ligand contact to FAD; sequence NHR. R205 lines the dUMP pocket. R205 (involved in ionization of N3 of dUMP, leading to its activation) is an active-site residue.

This sequence belongs to the thymidylate synthase ThyX family. In terms of assembly, homotetramer. It depends on FAD as a cofactor.

The catalysed reaction is dUMP + (6R)-5,10-methylene-5,6,7,8-tetrahydrofolate + NADPH + H(+) = dTMP + (6S)-5,6,7,8-tetrahydrofolate + NADP(+). The protein operates within pyrimidine metabolism; dTTP biosynthesis. Functionally, catalyzes the reductive methylation of 2'-deoxyuridine-5'-monophosphate (dUMP) to 2'-deoxythymidine-5'-monophosphate (dTMP) while utilizing 5,10-methylenetetrahydrofolate (mTHF) as the methyl donor, and NADPH and FADH(2) as the reductant. The polypeptide is Probable flavin-dependent thymidylate synthase (48) (Mycobacterium phage L5 (Mycobacteriophage L5)).